The primary structure comprises 476 residues: Glycogen synthase (476 aa).

K15 contacts ADP-alpha-D-glucose.

It belongs to the glycosyltransferase 1 family. Bacterial/plant glycogen synthase subfamily.

The enzyme catalyses [(1-&gt;4)-alpha-D-glucosyl](n) + ADP-alpha-D-glucose = [(1-&gt;4)-alpha-D-glucosyl](n+1) + ADP + H(+). It functions in the pathway glycan biosynthesis; glycogen biosynthesis. Functionally, synthesizes alpha-1,4-glucan chains using ADP-glucose. This is Glycogen synthase from Mycoplasma mobile (strain ATCC 43663 / 163K / NCTC 11711) (Mesomycoplasma mobile).